Here is a 222-residue protein sequence, read N- to C-terminus: Cytidylate kinase (222 aa).

7 to 15 serves as a coordination point for ATP; that stretch reads GPSASGKST.

Belongs to the cytidylate kinase family. Type 1 subfamily.

The protein localises to the cytoplasm. The enzyme catalyses CMP + ATP = CDP + ADP. The catalysed reaction is dCMP + ATP = dCDP + ADP. In Aquifex aeolicus (strain VF5), this protein is Cytidylate kinase.